A 231-amino-acid polypeptide reads, in one-letter code: Orotidine 5'-phosphate decarboxylase (231 aa).

Residues Asp11, Lys32, 59-68 (DLKFHDIPNT), Thr118, Arg180, Gln189, Gly209, and Arg210 contribute to the substrate site. Lys61 (proton donor) is an active-site residue.

Belongs to the OMP decarboxylase family. Type 1 subfamily. Homodimer.

It catalyses the reaction orotidine 5'-phosphate + H(+) = UMP + CO2. It participates in pyrimidine metabolism; UMP biosynthesis via de novo pathway; UMP from orotate: step 2/2. Catalyzes the decarboxylation of orotidine 5'-monophosphate (OMP) to uridine 5'-monophosphate (UMP). This chain is Orotidine 5'-phosphate decarboxylase, found in Synechocystis sp. (strain ATCC 27184 / PCC 6803 / Kazusa).